Here is a 432-residue protein sequence, read N- to C-terminus: Adenylosuccinate synthetase (432 aa).

Residues 12–18 (GDEGKGK) and 40–42 (GHT) each bind GTP. Residue Asp13 is the Proton acceptor of the active site. Asp13 and Gly40 together coordinate Mg(2+). IMP is bound by residues 13-16 (DEGK), 38-41 (NAGH), Thr132, Arg146, Gln226, Thr241, and Arg305. Residue His41 is the Proton donor of the active site. Substrate is bound at residue 301 to 307 (TVTGRKR). GTP-binding positions include Arg307, 333–335 (KLD), and 415–417 (STS).

This sequence belongs to the adenylosuccinate synthetase family. In terms of assembly, homodimer. Requires Mg(2+) as cofactor.

Its subcellular location is the cytoplasm. The enzyme catalyses IMP + L-aspartate + GTP = N(6)-(1,2-dicarboxyethyl)-AMP + GDP + phosphate + 2 H(+). It functions in the pathway purine metabolism; AMP biosynthesis via de novo pathway; AMP from IMP: step 1/2. Functionally, plays an important role in the de novo pathway of purine nucleotide biosynthesis. Catalyzes the first committed step in the biosynthesis of AMP from IMP. The polypeptide is Adenylosuccinate synthetase (Agrobacterium fabrum (strain C58 / ATCC 33970) (Agrobacterium tumefaciens (strain C58))).